The following is an 89-amino-acid chain: Large ribosomal subunit protein bL27 (89 aa).

The disordered stretch occupies residues 1-20 (MAHKKAGGSSRNGRDSAGRR).

It belongs to the bacterial ribosomal protein bL27 family.

The protein is Large ribosomal subunit protein bL27 of Rhizorhabdus wittichii (strain DSM 6014 / CCUG 31198 / JCM 15750 / NBRC 105917 / EY 4224 / RW1) (Sphingomonas wittichii).